Consider the following 988-residue polypeptide: Transcriptional regulator of yeast form adherence 5 (988 aa).

2 consecutive C2H2-type zinc fingers follow at residues 7-29 and 35-59; these read YICAFCARAFTRSEHKQRHERSH and FHCLHCTSSFVRRDLLQRHCRTVHH. Polar residues predominate over residues 59–83; that stretch reads HTNLNPSTLPSNKSLKNPTTNPLDL. 2 disordered regions span residues 59 to 129 and 174 to 229; these read HTNL…SSVG and SMES…SNNN. The segment covering 84-106 has biased composition (low complexity); the sequence is SNNEGTTTTTKTGNRKNNSNKNG. Polar residues-rich tracts occupy residues 113–129 and 174–208; these read TNPNPAVSNDDNRSSVG and SMESDQHSLTTFDSPTSSLGVSMTPSGSTNSEIVL.

Its subcellular location is the nucleus. In terms of biological role, transcription factor required for yeast cell adherence to silicone substrate. The sequence is that of Transcriptional regulator of yeast form adherence 5 (TRY5) from Candida albicans (strain SC5314 / ATCC MYA-2876) (Yeast).